The following is a 344-amino-acid chain: 2,3,4,5-tetrahydropyridine-2,6-dicarboxylate N-succinyltransferase (344 aa).

Position 205 (Glu-205) interacts with Mg(2+). Glu-221 acts as the Acyl-anhydride intermediate in catalysis. Succinyl-CoA is bound by residues Arg-223, Gly-238, Ser-241, Ala-264, 279 to 280 (EA), Gly-287, Lys-304, and 317 to 320 (RRNS).

It belongs to the type 2 tetrahydrodipicolinate N-succinyltransferase family. In terms of assembly, homotrimer.

The protein localises to the cytoplasm. It carries out the reaction (S)-2,3,4,5-tetrahydrodipicolinate + succinyl-CoA + H2O = (S)-2-succinylamino-6-oxoheptanedioate + CoA. It participates in amino-acid biosynthesis; L-lysine biosynthesis via DAP pathway; LL-2,6-diaminopimelate from (S)-tetrahydrodipicolinate (succinylase route): step 1/3. Catalyzes the conversion of the cyclic tetrahydrodipicolinate (THDP) into the acyclic N-succinyl-L-2-amino-6-oxopimelate using succinyl-CoA. The sequence is that of 2,3,4,5-tetrahydropyridine-2,6-dicarboxylate N-succinyltransferase from Pseudomonas putida (strain ATCC 47054 / DSM 6125 / CFBP 8728 / NCIMB 11950 / KT2440).